A 206-amino-acid chain; its full sequence is Large ribosomal subunit protein uL3 (206 aa).

The disordered stretch occupies residues S127–A151.

Belongs to the universal ribosomal protein uL3 family. In terms of assembly, part of the 50S ribosomal subunit. Forms a cluster with proteins L14 and L19.

Its function is as follows. One of the primary rRNA binding proteins, it binds directly near the 3'-end of the 23S rRNA, where it nucleates assembly of the 50S subunit. This is Large ribosomal subunit protein uL3 from Borreliella burgdorferi (strain ATCC 35210 / DSM 4680 / CIP 102532 / B31) (Borrelia burgdorferi).